The following is a 232-amino-acid chain: Small ribosomal subunit protein uS2 (232 aa).

The protein belongs to the universal ribosomal protein uS2 family.

This Pelotomaculum thermopropionicum (strain DSM 13744 / JCM 10971 / SI) protein is Small ribosomal subunit protein uS2.